The following is a 125-amino-acid chain: uncharacterized protein (125 aa).

Belongs to the HesB/IscA family.

This is an uncharacterized protein from Azospirillum brasilense.